A 335-amino-acid polypeptide reads, in one-letter code: Phosphate acyltransferase (335 aa).

This sequence belongs to the PlsX family. In terms of assembly, homodimer. Probably interacts with PlsY.

The protein resides in the cytoplasm. It carries out the reaction a fatty acyl-[ACP] + phosphate = an acyl phosphate + holo-[ACP]. Its pathway is lipid metabolism; phospholipid metabolism. Catalyzes the reversible formation of acyl-phosphate (acyl-PO(4)) from acyl-[acyl-carrier-protein] (acyl-ACP). This enzyme utilizes acyl-ACP as fatty acyl donor, but not acyl-CoA. This Streptococcus suis (strain 98HAH33) protein is Phosphate acyltransferase.